Consider the following 211-residue polypeptide: Probable transcription repressor protein RGM1 (211 aa).

A Nuclear localization signal motif is present at residues 6 to 11; sequence PKRNKD. C2H2-type zinc fingers lie at residues 19–44 and 50–73; these read YRCVGYPDCNMSFNRTEHLARHIRKH and FQCNICLKFFSRIDNLRQHQSSVH. The tract at residues 178-211 is disordered; it reads NIVELPPDSSDTPASPSKVQSFDQAKDASPNAKK. Over residues 183–194 the composition is skewed to low complexity; it reads PPDSSDTPASPS.

The protein resides in the nucleus. This Saccharomyces cerevisiae (strain ATCC 204508 / S288c) (Baker's yeast) protein is Probable transcription repressor protein RGM1 (RGM1).